Consider the following 205-residue polypeptide: Small ribosomal subunit protein uS4 (205 aa).

Residues 1-16 (MSKRESSKYKIDRRMG) show a composition bias toward basic and acidic residues. Residues 1–46 (MSKRESSKYKIDRRMGENIWGRPKSPVNRREYGPGQHGQRRKSKLS) form a disordered region. The S4 RNA-binding domain maps to 94 to 157 (SRLDAIVYRA…KQLVSVLESV (64 aa)).

It belongs to the universal ribosomal protein uS4 family. As to quaternary structure, part of the 30S ribosomal subunit. Contacts protein S5. The interaction surface between S4 and S5 is involved in control of translational fidelity.

Functionally, one of the primary rRNA binding proteins, it binds directly to 16S rRNA where it nucleates assembly of the body of the 30S subunit. Its function is as follows. With S5 and S12 plays an important role in translational accuracy. This is Small ribosomal subunit protein uS4 from Sinorhizobium fredii (strain NBRC 101917 / NGR234).